Reading from the N-terminus, the 180-residue chain is UPF0340 protein llmg_0465 (180 aa).

Belongs to the UPF0340 family.

The protein is UPF0340 protein llmg_0465 of Lactococcus lactis subsp. cremoris (strain MG1363).